The following is a 520-amino-acid chain: Transposase for insertion sequence element IS21-like (520 aa).

Residues 13 to 78 (YMWYKVRELQ…KYEEYVRGTL (66 aa)) enclose the HTH IS21-type domain. The Integrase catalytic domain maps to 136–312 (LPETPYGEYA…VPSEEFAVEK (177 aa)).

This sequence belongs to the transposase IS21/IS408/IS1162 family.

Involved in the transposition of the insertion sequence. The polypeptide is Transposase for insertion sequence element IS21-like (tnpA) (Bacteroides fragilis).